We begin with the raw amino-acid sequence, 188 residues long: HTH-type transcriptional repressor AcnR (188 aa).

The HTH tetR-type domain maps to 10–70; sequence TNSRQEILEG…ALAREDAARM (61 aa). A DNA-binding region (H-T-H motif) is located at residues 33–52; it reads TVRRLEEATGKSRGAIFHHF. Residues 79–80, Arg130, and Asn134 contribute to the citrate site; that span reads LV. Glu181 contributes to the Mg(2+) binding site. Arg185 is a citrate binding site.

Homodimer.

In terms of biological role, acnR negatively controls the expression of the aconitase gene acn. Binds to the imperfect inverted repeat in the acn promoter region. This is HTH-type transcriptional repressor AcnR from Corynebacterium glutamicum (strain ATCC 13032 / DSM 20300 / JCM 1318 / BCRC 11384 / CCUG 27702 / LMG 3730 / NBRC 12168 / NCIMB 10025 / NRRL B-2784 / 534).